A 20-amino-acid polypeptide reads, in one-letter code: ITXGQVTGSLAPXIAFLRTK.

This sequence belongs to the plant LTP family.

Functionally, plant non-specific lipid-transfer proteins transfer phospholipids as well as galactolipids across membranes. May play a role in wax or cutin deposition in the cell walls of expanding epidermal cells and certain secretory tissues. The polypeptide is Non-specific lipid-transfer protein (Citrus sinensis (Sweet orange)).